Here is a 427-residue protein sequence, read N- to C-terminus: MSELQKSFAKAKLAKLPPEAPPFSMHPPRDEDDSESASSTGTVVPSPSRQLFARSRGSTCGVIFRLLAILTHPRSNSVETLNWTDFFTQELFLIQETDSARITHHVYLTPPTNSGPLFVMHHGAGSSGLSFATCAEEIRKILPKAGILSIDARDHGQTSTYTETGEGKVELDLSLETLNRDLVFIVRETQSKMGWESLPDIVLVGHSLGGAVITDVAKKGELGPKVLAYAVLDVVEGSAMDALQSMEKYLSTRPTRFPSLASGIEWHTRSRTIRNRTSARVSVPSLLYEEAAPTDPSKPWVWRTNLAETKPFWENWFIGLSKKFLEARGGKLLLLAGTDRLDKELMIGQMQGKYQLQVFPEAGHFVQEDQPVKTAQVLVDFYKRNDRSALVLPPKVADMQASAAMKQGAEAGAVPPFGRGQGSSHKP.

The segment at 1-49 is disordered; it reads MSELQKSFAKAKLAKLPPEAPPFSMHPPRDEDDSESASSTGTVVPSPSR. The segment covering 36–49 has biased composition (polar residues); it reads SASSTGTVVPSPSR. Active-site residues include Ser207, Asp233, and His364. Residues 402–427 are disordered; sequence SAAMKQGAEAGAVPPFGRGQGSSHKP.

Belongs to the AB hydrolase superfamily.

It carries out the reaction [phosphatase 2A protein]-C-terminal L-leucine methyl ester + H2O = [phosphatase 2A protein]-C-terminal L-leucine + methanol + H(+). In terms of biological role, demethylates proteins that have been reversibly carboxymethylated. Demethylates the phosphatase PP2A catalytic subunit. The chain is Protein phosphatase methylesterase 1 (ppe1) from Aspergillus oryzae (strain ATCC 42149 / RIB 40) (Yellow koji mold).